A 291-amino-acid chain; its full sequence is MAVYAVGDLQGCLEPLQCLLEHVHFNPEQDRLWLVGDLVNRGPQSLETLRYLYSLRESLVCVLGNHDLHLLAVARKKELLKKGDTLLEILEAPDRDDLLGWVRRQKLMHYDAQRNVAMVHAGIAPQWTLKKALKHAAEVEHALQDEQLYGAFLDGMYGNEPTRWDNDLQGVTRLRVITNYFTRMRFCTSDGKLDLKSKEGVGTAIPGYAPWFSHQSRKTRDVKIIFGHWAALEGRCDEPDVFALDSGCVWGGSMTLLNVDTLERHQCNCDAMGNAADGLVTRVQPGATPLP.

This sequence belongs to the Ap4A hydrolase family.

The enzyme catalyses P(1),P(4)-bis(5'-adenosyl) tetraphosphate + H2O = 2 ADP + 2 H(+). Functionally, hydrolyzes diadenosine 5',5'''-P1,P4-tetraphosphate to yield ADP. This is Bis(5'-nucleosyl)-tetraphosphatase, symmetrical from Pseudomonas syringae pv. syringae (strain B728a).